The primary structure comprises 64 residues: Large ribosomal subunit protein bL35 (64 aa).

Residues 1–14 (MKNKTHKGTAKRVK) are compositionally biased toward basic residues. Residues 1–30 (MKNKTHKGTAKRVKVTGSGKLVREQANRRH) are disordered. The segment covering 21–30 (LVREQANRRH) has biased composition (basic and acidic residues).

Belongs to the bacterial ribosomal protein bL35 family.

The protein is Large ribosomal subunit protein bL35 of Corynebacterium efficiens (strain DSM 44549 / YS-314 / AJ 12310 / JCM 11189 / NBRC 100395).